A 474-amino-acid chain; its full sequence is MVVGKITQVIGPVVDVDFPAGQLPKILNALKLSNPSISAEPDNLVLEVAQHLGESSVRTIAMDSTDGLVRGMEVRDTGKPIMVPVGNECLGRILNVVGVPIDEAGPVHAKKVAPIHREPPPFIEQSTKVEVFETGIKVIDLIAPYRKGGKIGLFGGAGVGKTVLILELINNVAKAHGGVSVFAGVGERTREGNDLFLEMSESKLADGSPVISKAALIYGQMNEPPGARSRVALSALAVAEHFRDEEGQDVLLFVDNIFRFTQAGSEVSALLGRIPSAVGYQPTLSTEMGAFQERITSTTKGSVTSVQAIYVPADDLTDPAPATAFAHLDATTVLSRAISELGIYPAVDPLDSNSTMLDPQIVGEKHYSVARRVQQTLQRYKDLQDIIAILGMDELSEDDKLVVARARKIQKFLSQPFFVAAQFTGLEGKLVPLKDTIAGFEEILDGKLDHVAEQDFYLVGGIEDVKAKASQRAS.

Position 155–162 (155–162 (GGAGVGKT)) interacts with ATP.

The protein belongs to the ATPase alpha/beta chains family. F-type ATPases have 2 components, CF(1) - the catalytic core - and CF(0) - the membrane proton channel. CF(1) has five subunits: alpha(3), beta(3), gamma(1), delta(1), epsilon(1). CF(0) has three main subunits: a(1), b(2) and c(9-12). The alpha and beta chains form an alternating ring which encloses part of the gamma chain. CF(1) is attached to CF(0) by a central stalk formed by the gamma and epsilon chains, while a peripheral stalk is formed by the delta and b chains.

The protein localises to the cell inner membrane. The catalysed reaction is ATP + H2O + 4 H(+)(in) = ADP + phosphate + 5 H(+)(out). Produces ATP from ADP in the presence of a proton gradient across the membrane. The catalytic sites are hosted primarily by the beta subunits. This is ATP synthase subunit beta from Sorangium cellulosum (strain So ce56) (Polyangium cellulosum (strain So ce56)).